Reading from the N-terminus, the 193-residue chain is MEQDIYSNGSDHMERMLLFAFLAESSGCEFQEQLPSLQSQGVLCSVKDALCYDSDGELQTDGNRSGHLQNGELVPDPEVNEAIVRTIAAQLAEIGDQLDKQIKAKVVNDLVQHFLNENLPREEITRCLSQAVEGLARAIPSDLEQEKAMLVLAMLLTKKVANQMPSLLQRVFSTTVNYISQHFHNYIVRMLRE.

The short motif at 87-101 (IAAQLAEIGDQLDKQ) is the BH3 element.

As to quaternary structure, forms heterodimers either with the pro-apoptotic protein BAX or the anti-apoptotic protein Bcl-2.

It is found in the cytoplasm. The protein resides in the mitochondrion outer membrane. Its function is as follows. Induces caspases and apoptosis. Counters the protective effect of Bcl-2. The protein is BH3-interacting domain death agonist (BID) of Gallus gallus (Chicken).